The sequence spans 354 residues: Protein REDOX 1 (354 aa).

Cysteine 44 is a binding site for Zn(2+). NAD(+) is bound at residue 45-49 (HSDLH). Positions 66, 97, 100, 103, and 111 each coordinate Zn(2+). NAD(+) contacts are provided by residues 185-190 (GLGGLG), lysine 214, 271-273 (VGA), 295-297 (SAV), and arginine 340.

It belongs to the zinc-containing alcohol dehydrogenase family. Requires Zn(2+) as cofactor. In terms of tissue distribution, expressed in leaf epidermis.

The catalysed reaction is 3,17-didehydrostemmadenine + NADPH + H2O = (16S)-deshydroxymethyl-stemmadenine + formate + NADP(+). The enzyme catalyses 3,17-didehydrostemmadenine + NADPH + H2O = (16R)-deshydroxymethyl-stemmadenine + formate + NADP(+). It carries out the reaction 17-dehydrostemmadenine + NADP(+) = 3,17-didehydrostemmadenine + NADPH. It participates in alkaloid biosynthesis. Functionally, component of iboga and aspidosperma monoterpenoid indole alkaloids (MIAs, e.g. tabersonine and catharanthine) biosynthesis pathway from 19E-geissoschizine. Catalyzes the first oxidation step of the unstable intermediate product resulting from the reaction triggered by the geissoschizine oxidase (GO) in the stemmadenine biosynthesis process from 19E-geissoschizine. This chain is Protein REDOX 1, found in Catharanthus roseus (Madagascar periwinkle).